Reading from the N-terminus, the 68-residue chain is Antimicrobial peptide Eval418 (68 aa).

The signal sequence occupies residues 1-23 (MRTQLAVLLVALVLLQMIAQSEA). Ile36 bears the Isoleucine amide mark. Positions 37–68 (GKRGLRNLDDLDDVFDDDLSAADLEFLKQLMR) are excised as a propeptide.

Belongs to the non-disulfide-bridged peptide (NDBP) superfamily. Short antimicrobial peptide (group 4) family. As to expression, expressed by the venom gland.

The protein localises to the secreted. Probable antimicrobial peptide. Shows dose-dependent and time-dependent inactivation of herpes simplex virus type 1 (HSV-1) and dose-dependent inhibition of HSV-1 viral attachment to host cells. Scarcely suppress an established HSV-1 infection due to poor cellular uptake. This Euscorpiops validus (Scorpion) protein is Antimicrobial peptide Eval418.